We begin with the raw amino-acid sequence, 181 residues long: uncharacterized protein (181 aa).

A run of 4 helical transmembrane segments spans residues 3–23, 67–87, 92–112, and 159–179; these read LSQT…VLIL, ALLL…GLSV, VLGV…VLFI, and MFIL…LWII.

Belongs to the YggT family.

The protein resides in the cell membrane. This is an uncharacterized protein from Haemophilus influenzae (strain ATCC 51907 / DSM 11121 / KW20 / Rd).